Here is a 93-residue protein sequence, read N- to C-terminus: Corticostatin 1 (93 aa).

The N-terminal stretch at M1 to A19 is a signal peptide. Residues E20–K59 constitute a propeptide that is removed on maturation. 3 disulfides stabilise this stretch: C62–C90, C64–C79, and C69–C89.

Belongs to the alpha-defensin family.

Its subcellular location is the secreted. In terms of biological role, microbicidal activity and inhibits corticotropin (ACTH) stimulated corticosterone production. In Oryctolagus cuniculus (Rabbit), this protein is Corticostatin 1.